Here is a 146-residue protein sequence, read N- to C-terminus: Decarboxylase dmxR15 (146 aa).

One can recognise an EthD domain in the interval 31 to 126 (PGMSEGDYRN…MHDHEVFADT (96 aa)).

The protein belongs to the tpcK family.

The enzyme catalyses atrochrysone carboxylate + H(+) = atrochrysone + CO2. The protein operates within secondary metabolite biosynthesis. Functionally, decarboxylase; part of the gene cluster that mediates the biosynthesis of the dimeric xanthones cryptosporioptides. The pathway begins with the synthesis of atrochrysone thioester by the polyketide synthase dmx-nrPKS. The atrochrysone carboxyl ACP thioesterase dmxR1 then breaks the thioester bond and releases the atrochrysone carboxylic acid from dmx-nrPKS. Atrochrysone carboxylic acid is decarboxylated by the decarboxylase dmxR15, and oxidized by the anthrone oxygenase dmxR16 to yield emodin. Emodin is then reduced to emodin hydroquinone by the oxidoreductase dmxR7. A-ring reduction by the short chain dehydrogenase dmxR18, dehydration by the scytalone dehydratase-like protein dmxR17 and probable spontaneous re-oxidation, results in overall deoxygenation to chrysophanol. Baeyer-Villiger oxidation by the Baeyer-Villiger monooxygenase (BVMO) dmxR6 then yields monodictylactone in equilibrium with monodictyphenone. In the case of the cryptosporioptides biosynthesis, monodictylactone is reduced at C-12 to an alcohol (by the short chain dehydrogenases dmxR12 or dmxR8) and hydroxylated at C-5 by dmxR9, yielding the electron-rich aromatic which could eliminate H(2)O to form the ortho-quinonemethide, followed by tautomerisation to paraquinone and complete the formal reduction to produce the 10-methylgroup. Conjugate addition of C-4a-OH to the resulting paraquinone by the monooxygenase dmxR10 then gives cyclohexadienone, which is then reduced at C-5 by the short chain dehydrogenase dmxR3 to give the dihydroxanthone. The 6,7-epoxide in the cryptosporioptides could be introduced by the cytochrome P450 monooxygenase dmxL3. The highly reducing PKS dmxL2 manufactures butyrate, which is further carboxylated by dmxL1 to form ethylmalonate. It is not yet clear whether the carboxylation occurs while the butyrate is attached to the ACP of dmxL2, but this unusual fungal metabolite could then be esterified to O-5 by the O-acetyltransferase dmxR13. Finally, dimerization performed by dmxR5 gives the observed dimers cryptosporioptides A, B and C as the final products of the pathway. The chain is Decarboxylase dmxR15 from Cryptosporiopsis sp. (strain 8999).